The following is a 906-amino-acid chain: Pre-mRNA-splicing factor prp1 (906 aa).

2 disordered regions span residues 50–129 (IEQR…VSSQ) and 142–164 (DEDW…KQPR). The span at 108-124 (REKQEQLQKEKYEKENP) shows a compositional bias: basic and acidic residues. S235 carries the post-translational modification Phosphoserine. HAT repeat units follow at residues 258–290 (GDIR…LEEV), 322–353 (HPAA…KLEN), 354–384 (QAQH…NLEE), 385–416 (EVDN…LETY), 524–556 (KCID…LEKL), 558–590 (GTTE…ERKN), 592–624 (NDIA…IEFV), 693–725 (EQIE…LEEK), 726–758 (QSVI…MELR), 760–792 (GNIS…LEPR), and 824–856 (KKAD…YSLE).

In terms of assembly, interacts with brr2 and spp42.

It is found in the nucleus. In terms of biological role, involved in pre-mRNA splicing. Interacts with prp6 and prp13. May also be involved in the regulation of the G0-G1/G2 transition. Required for pre-spliceosome formation, which is the first step of pre-mRNA splicing. This protein is associated with snRNP U5. Has a role in branch site-3' splice site selection. Associates with the branch site-3' splice 3'-exon region. This chain is Pre-mRNA-splicing factor prp1 (prp1), found in Schizosaccharomyces pombe (strain 972 / ATCC 24843) (Fission yeast).